We begin with the raw amino-acid sequence, 74 residues long: High-potential iron-sulfur protein isozyme 2 (74 aa).

Positions 36, 39, 53, and 67 each coordinate [4Fe-4S] cluster.

As to quaternary structure, homodimer.

In terms of biological role, specific class of high-redox-potential 4Fe-4S ferredoxins. Functions in anaerobic electron transport in most purple and in some other photosynthetic bacteria and in at least one genus (Paracoccus) of halophilic, denitrifying bacteria. In Ectothiorhodospira mobilis, this protein is High-potential iron-sulfur protein isozyme 2.